Here is a 433-residue protein sequence, read N- to C-terminus: sn-glycerol-3-phosphate-binding periplasmic protein UgpB (433 aa).

Residues 1–25 (MFTRLITTSALTGAIALTIGSQAFA) form the signal peptide. Sn-glycerol 3-phosphate contacts are provided by tyrosine 67, aspartate 91, serine 146, serine 273, glycine 307, tyrosine 346, and arginine 397.

This sequence belongs to the bacterial solute-binding protein 1 family. The complex is composed of two ATP-binding proteins (UgpC), two transmembrane proteins (UgpA and UgpE) and a solute-binding protein (UgpB).

The protein localises to the periplasm. Functionally, part of the ABC transporter complex UgpBAEC involved in sn-glycerol-3-phosphate (G3P) import. Binds G3P. The chain is sn-glycerol-3-phosphate-binding periplasmic protein UgpB (ugpB) from Brucella suis biovar 1 (strain 1330).